Reading from the N-terminus, the 306-residue chain is MSTLGHKSDNSLVSNAFGFLRFPLNFMPYDSDAEWVITGIPFDMATSGRAGGRHGPAAIRQVSTNLAWEGNRWPWNFDLRDRVNVVDCGDIVFNFGDAQSMSDNLQAHAEKLLAAGKRMLSFGGDHFVTLPLLRAHAKHFGKMALVHFDAHTDTYANGSQYDHGTMFFHAPNEGLIDPTHSVQIGIRTEYDHDNGFTVLDAAQVNDRSADDLLAQIKQIVGDMPVYLTFDIDCLDPAFAPGTGTPVIGGLTSDRALKLVRGMQSLNIVGMDVVEVAPAYDQSEITALAAATLGLEMLYLQAAKKTK.

Residues histidine 126, aspartate 149, histidine 151, aspartate 153, aspartate 230, and aspartate 232 each coordinate Mn(2+).

The protein belongs to the arginase family. Agmatinase subfamily. Mn(2+) is required as a cofactor.

It catalyses the reaction agmatine + H2O = urea + putrescine. It functions in the pathway amine and polyamine biosynthesis; putrescine biosynthesis via agmatine pathway; putrescine from agmatine: step 1/1. Functionally, catalyzes the formation of putrescine from agmatine. The polypeptide is Agmatinase (Serratia proteamaculans (strain 568)).